A 689-amino-acid polypeptide reads, in one-letter code: Glycine--tRNA ligase beta subunit (689 aa).

It belongs to the class-II aminoacyl-tRNA synthetase family. In terms of assembly, tetramer of two alpha and two beta subunits.

The protein localises to the cytoplasm. The catalysed reaction is tRNA(Gly) + glycine + ATP = glycyl-tRNA(Gly) + AMP + diphosphate. This Salmonella paratyphi A (strain ATCC 9150 / SARB42) protein is Glycine--tRNA ligase beta subunit.